The primary structure comprises 468 residues: Mitochondrial distribution and morphology protein 10 (468 aa).

The protein belongs to the MDM10 family. As to quaternary structure, component of the ER-mitochondria encounter structure (ERMES) or MDM complex, composed of MMM1, MDM10, MDM12 and MDM34. Associates with the mitochondrial outer membrane sorting assembly machinery SAM(core) complex.

The protein resides in the mitochondrion outer membrane. Component of the ERMES/MDM complex, which serves as a molecular tether to connect the endoplasmic reticulum and mitochondria. Components of this complex are involved in the control of mitochondrial shape and protein biogenesis and may function in phospholipid exchange. MDM10 is involved in the late assembly steps of the general translocase of the mitochondrial outer membrane (TOM complex). Functions in the TOM40-specific route of the assembly of outer membrane beta-barrel proteins, including the association of TOM40 with the receptor TOM22 and small TOM proteins. Can associate with the SAM(core) complex as well as the MDM12-MMM1 complex, both involved in late steps of the major beta-barrel assembly pathway, that is responsible for biogenesis of all outer membrane beta-barrel proteins. May act as a switch that shuttles between both complexes and channels precursor proteins into the TOM40-specific pathway. Plays a role in mitochondrial morphology and in the inheritance of mitochondria. The chain is Mitochondrial distribution and morphology protein 10 from Blastomyces gilchristii (strain SLH14081) (Blastomyces dermatitidis).